The following is a 134-amino-acid chain: Cytochrome b5 (134 aa).

The Cytochrome b5 heme-binding domain occupies T6–V82. H41 and H65 together coordinate heme. Positions R86–E105 are disordered. Residues T87–E105 are compositionally biased toward polar residues. The chain crosses the membrane as a helical span at residues W111 to G131.

This sequence belongs to the cytochrome b5 family.

Its subcellular location is the endoplasmic reticulum membrane. The protein resides in the microsome membrane. Functionally, cytochrome b5 is a membrane-bound hemoprotein which functions as an electron carrier for several membrane-bound oxygenases. The protein is Cytochrome b5 (Cyt-b5) of Drosophila melanogaster (Fruit fly).